The chain runs to 709 residues: Elongation factor G (709 aa).

Positions 10 to 286 (NKVRNIGIMA…AVVDFLPSPL (277 aa)) constitute a tr-type G domain. GTP is bound by residues 19 to 26 (AHIDAGKT), 83 to 87 (DTPGH), and 137 to 140 (NKMD).

It belongs to the TRAFAC class translation factor GTPase superfamily. Classic translation factor GTPase family. EF-G/EF-2 subfamily.

The protein resides in the cytoplasm. Catalyzes the GTP-dependent ribosomal translocation step during translation elongation. During this step, the ribosome changes from the pre-translocational (PRE) to the post-translocational (POST) state as the newly formed A-site-bound peptidyl-tRNA and P-site-bound deacylated tRNA move to the P and E sites, respectively. Catalyzes the coordinated movement of the two tRNA molecules, the mRNA and conformational changes in the ribosome. The chain is Elongation factor G from Corynebacterium glutamicum (strain R).